A 365-amino-acid polypeptide reads, in one-letter code: Caffeic acid 3-O-methyltransferase 1 (365 aa).

130-136 (MNQDKVL) is a binding site for substrate. The interval 162-180 (AFEYHGTDPRFNKVFNKGM) is substrate binding. Positions 208, 231, 251, 252, and 265 each coordinate S-adenosyl-L-methionine. His269 serves as the catalytic Proton acceptor.

It belongs to the class I-like SAM-binding methyltransferase superfamily. Cation-independent O-methyltransferase family. COMT subfamily. Homodimer. The N-terminus is blocked. Xylem.

The enzyme catalyses (E)-caffeate + S-adenosyl-L-methionine = (E)-ferulate + S-adenosyl-L-homocysteine + H(+). Its pathway is aromatic compound metabolism; phenylpropanoid biosynthesis. Its function is as follows. Catalyzes the conversion of caffeic acid to ferulic acid and of 5-hydroxyferulic acid to sinapic acid. The resulting products may subsequently be converted to the corresponding alcohols that are incorporated into lignins. The chain is Caffeic acid 3-O-methyltransferase 1 (OMT1) from Populus tremuloides (Quaking aspen).